The primary structure comprises 166 residues: Large ribosomal subunit protein uL10 (166 aa).

It belongs to the universal ribosomal protein uL10 family. As to quaternary structure, part of the ribosomal stalk of the 50S ribosomal subunit. The N-terminus interacts with L11 and the large rRNA to form the base of the stalk. The C-terminus forms an elongated spine to which L12 dimers bind in a sequential fashion forming a multimeric L10(L12)X complex.

Forms part of the ribosomal stalk, playing a central role in the interaction of the ribosome with GTP-bound translation factors. The polypeptide is Large ribosomal subunit protein uL10 (Aeromonas hydrophila subsp. hydrophila (strain ATCC 7966 / DSM 30187 / BCRC 13018 / CCUG 14551 / JCM 1027 / KCTC 2358 / NCIMB 9240 / NCTC 8049)).